Here is a 262-residue protein sequence, read N- to C-terminus: Putative ankyrin repeat protein FPV243 (262 aa).

Residues 25 to 54 (YGSTPLFEAICNCSCKNVKLFLENNADINE) form an ANK repeat.

The sequence is that of Putative ankyrin repeat protein FPV243 from Vertebrata (FPV).